The sequence spans 285 residues: Cytochrome c1 (285 aa).

A signal peptide spans 1 to 22 (MIRKLTLTAATALALSGGAAMA). Residues C58, C61, H62, and M207 each coordinate heme c. A helical membrane pass occupies residues 251–269 (AGFTAVMFLTVLSVLLYLT).

The main subunits of complex b-c1 are: cytochrome b, cytochrome c1 and the Rieske protein. Binds 1 heme c group covalently per subunit.

The protein resides in the cell membrane. Functionally, component of the ubiquinol-cytochrome c reductase complex (complex III or cytochrome b-c1 complex), which is a respiratory chain that generates an electrochemical potential coupled to ATP synthesis. c1 functions as an electron donor to cytochrome c. This chain is Cytochrome c1 (petC), found in Cereibacter sphaeroides (Rhodobacter sphaeroides).